Reading from the N-terminus, the 158-residue chain is NAD(P)H-quinone oxidoreductase subunit J, chloroplastic (158 aa).

Belongs to the complex I 30 kDa subunit family. As to quaternary structure, NDH is composed of at least 16 different subunits, 5 of which are encoded in the nucleus.

Its subcellular location is the plastid. The protein localises to the chloroplast thylakoid membrane. The catalysed reaction is a plastoquinone + NADH + (n+1) H(+)(in) = a plastoquinol + NAD(+) + n H(+)(out). It catalyses the reaction a plastoquinone + NADPH + (n+1) H(+)(in) = a plastoquinol + NADP(+) + n H(+)(out). Functionally, NDH shuttles electrons from NAD(P)H:plastoquinone, via FMN and iron-sulfur (Fe-S) centers, to quinones in the photosynthetic chain and possibly in a chloroplast respiratory chain. The immediate electron acceptor for the enzyme in this species is believed to be plastoquinone. Couples the redox reaction to proton translocation, and thus conserves the redox energy in a proton gradient. This chain is NAD(P)H-quinone oxidoreductase subunit J, chloroplastic, found in Panax ginseng (Korean ginseng).